The sequence spans 217 residues: Adapter protein MecA (217 aa).

The protein belongs to the MecA family. Homodimer.

Enables the recognition and targeting of unfolded and aggregated proteins to the ClpC protease or to other proteins involved in proteolysis. In Listeria innocua serovar 6a (strain ATCC BAA-680 / CLIP 11262), this protein is Adapter protein MecA.